The chain runs to 1150 residues: ATP-dependent helicase/deoxyribonuclease subunit B (1150 aa).

8-15 (GRAGSGKS) contacts ATP. Positions 786, 1106, 1109, and 1115 each coordinate [4Fe-4S] cluster.

Belongs to the helicase family. AddB/RexB type 1 subfamily. In terms of assembly, heterodimer of AddA and AddB. Mg(2+) is required as a cofactor. Requires [4Fe-4S] cluster as cofactor.

The heterodimer acts as both an ATP-dependent DNA helicase and an ATP-dependent, dual-direction single-stranded exonuclease. Recognizes the chi site generating a DNA molecule suitable for the initiation of homologous recombination. The AddB subunit has 5' -&gt; 3' nuclease activity but not helicase activity. The protein is ATP-dependent helicase/deoxyribonuclease subunit B of Clostridium botulinum (strain Hall / ATCC 3502 / NCTC 13319 / Type A).